A 137-amino-acid polypeptide reads, in one-letter code: Large ribosomal subunit protein uL16 (137 aa).

The protein belongs to the universal ribosomal protein uL16 family. In terms of assembly, part of the 50S ribosomal subunit.

Its function is as follows. Binds 23S rRNA and is also seen to make contacts with the A and possibly P site tRNAs. This chain is Large ribosomal subunit protein uL16, found in Nitrobacter hamburgensis (strain DSM 10229 / NCIMB 13809 / X14).